Here is a 253-residue protein sequence, read N- to C-terminus: Major prion protein (253 aa).

Positions 1–22 are cleaved as a signal peptide; that stretch reads MANLGCWMLVLFVATWSDLGLC. Residues 23-230 are interaction with GRB2, ERI3 and SYN1; the sequence is KKRPKPGGWN…ESQAYYQRGS (208 aa). The interval 26 to 108 is disordered; it reads PKPGGWNTGG…WNKPSKPKTN (83 aa). Tandem repeats lie at residues 51 to 59, 60 to 67, 68 to 75, 76 to 83, and 84 to 91. A 5 X 8 AA tandem repeats of P-H-G-G-G-W-G-Q region spans residues 51–91; that stretch reads PQGGGGWGQPHGGGWGQPHGGGWGQPHGGGWGQPHGGGWGQ. Residues 52 to 95 show a composition bias toward gly residues; it reads QGGGGWGQPHGGGWGQPHGGGWGQPHGGGWGQPHGGGWGQGGGT. Cu(2+) is bound by residues His-61, Gly-62, Gly-63, His-69, Gly-70, Gly-71, His-77, Gly-78, Gly-79, His-85, Gly-86, and Gly-87. Cysteines 179 and 214 form a disulfide. N-linked (GlcNAc...) asparagine glycans are attached at residues Asn-181 and Asn-197. Ser-230 carries the GPI-anchor amidated serine lipid modification. The propeptide at 231-253 is removed in mature form; it reads SMVLFSSPPVILLISFLIFLIVG.

The protein belongs to the prion family. Monomer and homodimer. Has a tendency to aggregate into amyloid fibrils containing a cross-beta spine, formed by a steric zipper of superposed beta-strands. Soluble oligomers may represent an intermediate stage on the path to fibril formation. Copper binding may promote oligomerization. Interacts with GRB2, APP, ERI3/PRNPIP and SYN1. Mislocalized cytosolically exposed PrP interacts with MGRN1; this interaction alters MGRN1 subcellular location and causes lysosomal enlargement. Interacts with KIAA1191.

Its subcellular location is the cell membrane. The protein resides in the golgi apparatus. Its function is as follows. Its primary physiological function is unclear. Has cytoprotective activity against internal or environmental stresses. May play a role in neuronal development and synaptic plasticity. May be required for neuronal myelin sheath maintenance. May play a role in iron uptake and iron homeostasis. Soluble oligomers are toxic to cultured neuroblastoma cells and induce apoptosis (in vitro). Association with GPC1 (via its heparan sulfate chains) targets PRNP to lipid rafts. Also provides Cu(2+) or Zn(2+) for the ascorbate-mediated GPC1 deaminase degradation of its heparan sulfate side chains. The chain is Major prion protein (PRNP) from Hylobates lar (Lar gibbon).